The primary structure comprises 112 residues: Lutropin subunit beta (112 aa).

6 disulfides stabilise this stretch: C4–C52, C18–C67, C21–C105, C29–C83, C33–C85, and C88–C95. N8 carries N-linked (GlcNAc...) asparagine glycosylation.

The protein belongs to the glycoprotein hormones subunit beta family. As to quaternary structure, heterodimer of a common alpha chain and a unique beta chain which confers biological specificity to thyrotropin, lutropin, follitropin and gonadotropin.

Its subcellular location is the secreted. The protein is Lutropin subunit beta (lhb) of Aquarana catesbeiana (American bullfrog).